Consider the following 149-residue polypeptide: MHCPFCGTQDTKVIDSRLVADGASVRRRRECNHCKERFTTFETAELVMPRVIKTDGSREPFNEDKLRNGLLRALEKRPVSLELMEQAINKIKSSIRATGEREISSNFVGSLVMENLKQIDKVAYVRFASVYRSFEDIREFGEEIARLND.

Residues 3 to 34 fold into a zinc finger; the sequence is CPFCGTQDTKVIDSRLVADGASVRRRRECNHC. The ATP-cone domain occupies 49 to 139; the sequence is PRVIKTDGSR…VYRSFEDIRE (91 aa).

It belongs to the NrdR family. The cofactor is Zn(2+).

Its function is as follows. Negatively regulates transcription of bacterial ribonucleotide reductase nrd genes and operons by binding to NrdR-boxes. This chain is Transcriptional repressor NrdR, found in Idiomarina loihiensis (strain ATCC BAA-735 / DSM 15497 / L2-TR).